The following is a 468-amino-acid chain: Zinc finger protein 672 (468 aa).

4 C2H2-type zinc fingers span residues 15 to 37 (YSCS…ERAH), 43 to 65 (FCCL…RWTH), 71 to 93 (YICS…LGTH), and 100 to 123 (RPCR…ARQH). Residues 129–151 (HRCPLCARSFRQSALPFHLARAH) form a C2H2-type 5; degenerate zinc finger. 9 C2H2-type zinc fingers span residues 167-189 (YHCT…SRIH), 202-224 (HLCG…LQRH), 230-252 (FKCP…QRTH), 258-280 (YACS…QRSH), 286-308 (HVCA…QRSH), 314-336 (FPCP…LRTH), 342-364 (YHCE…LRNH), 370-392 (HKCP…RKTH), and 398-420 (AECT…QRSH).

It belongs to the krueppel C2H2-type zinc-finger protein family.

It is found in the nucleus. Its function is as follows. May be involved in transcriptional regulation. In Mus musculus (Mouse), this protein is Zinc finger protein 672 (Znf672).